The primary structure comprises 142 residues: Large ribosomal subunit protein uL13 (142 aa).

It belongs to the universal ribosomal protein uL13 family. As to quaternary structure, part of the 50S ribosomal subunit.

This protein is one of the early assembly proteins of the 50S ribosomal subunit, although it is not seen to bind rRNA by itself. It is important during the early stages of 50S assembly. In Shewanella baltica (strain OS223), this protein is Large ribosomal subunit protein uL13.